Reading from the N-terminus, the 340-residue chain is Anthranilate phosphoribosyltransferase (340 aa).

Residues glycine 82, 85–86 (GD), threonine 90, 92–95 (NIST), 110–118 (KHGSRSVSS), and serine 122 contribute to the 5-phospho-alpha-D-ribose 1-diphosphate site. Glycine 82 provides a ligand contact to anthranilate. Serine 94 provides a ligand contact to Mg(2+). Arginine 168 contributes to the anthranilate binding site. Aspartate 227 and glutamate 228 together coordinate Mg(2+).

The protein belongs to the anthranilate phosphoribosyltransferase family. Homodimer. Mg(2+) serves as cofactor.

The enzyme catalyses N-(5-phospho-beta-D-ribosyl)anthranilate + diphosphate = 5-phospho-alpha-D-ribose 1-diphosphate + anthranilate. The protein operates within amino-acid biosynthesis; L-tryptophan biosynthesis; L-tryptophan from chorismate: step 2/5. In terms of biological role, catalyzes the transfer of the phosphoribosyl group of 5-phosphorylribose-1-pyrophosphate (PRPP) to anthranilate to yield N-(5'-phosphoribosyl)-anthranilate (PRA). This is Anthranilate phosphoribosyltransferase from Hydrogenovibrio crunogenus (strain DSM 25203 / XCL-2) (Thiomicrospira crunogena).